A 490-amino-acid polypeptide reads, in one-letter code: GTPase Der (490 aa).

2 EngA-type G domains span residues 3–166 and 196–369; these read PVIA…PKDE and IKIA…KSAV. GTP-binding positions include 9 to 16, 56 to 60, 118 to 121, 202 to 209, 249 to 253, and 314 to 317; these read GRPNVGKS, DTGGI, NKID, DTAGV, and NKWD. The KH-like domain maps to 370 to 454; that stretch reads TRWPTSRLTQ…PIRIEFKGGE (85 aa). The interval 452-490 is disordered; that stretch reads GGENPYEGNKNTLTDRQVNKKRRMMSHHKKADKKRRDKR. Residues 470 to 490 are compositionally biased toward basic residues; it reads NKKRRMMSHHKKADKKRRDKR.

Belongs to the TRAFAC class TrmE-Era-EngA-EngB-Septin-like GTPase superfamily. EngA (Der) GTPase family. Associates with the 50S ribosomal subunit.

Its function is as follows. GTPase that plays an essential role in the late steps of ribosome biogenesis. This is GTPase Der from Pseudomonas savastanoi pv. phaseolicola (strain 1448A / Race 6) (Pseudomonas syringae pv. phaseolicola (strain 1448A / Race 6)).